Consider the following 184-residue polypeptide: Peptide deformylase (184 aa).

Fe cation is bound by residues Cys99 and His141. Glu142 is a catalytic residue. His145 contacts Fe cation.

Belongs to the polypeptide deformylase family. Fe(2+) serves as cofactor.

The catalysed reaction is N-terminal N-formyl-L-methionyl-[peptide] + H2O = N-terminal L-methionyl-[peptide] + formate. Removes the formyl group from the N-terminal Met of newly synthesized proteins. Requires at least a dipeptide for an efficient rate of reaction. N-terminal L-methionine is a prerequisite for activity but the enzyme has broad specificity at other positions. This is Peptide deformylase from Chlamydia abortus (strain DSM 27085 / S26/3) (Chlamydophila abortus).